A 63-amino-acid polypeptide reads, in one-letter code: Large ribosomal subunit protein uL29 (63 aa).

It belongs to the universal ribosomal protein uL29 family.

In Shewanella denitrificans (strain OS217 / ATCC BAA-1090 / DSM 15013), this protein is Large ribosomal subunit protein uL29.